The chain runs to 644 residues: Exoribonuclease 2 (644 aa).

The 328-residue stretch at 189-516 (REDLTSLDFV…NHRLLKAVIK (328 aa)) folds into the RNB domain. The region spanning 561 to 643 (GTRFAAEIVD…ETRSIIARPV (83 aa)) is the S1 motif domain.

It belongs to the RNR ribonuclease family. RNase II subfamily.

It localises to the cytoplasm. It carries out the reaction Exonucleolytic cleavage in the 3'- to 5'-direction to yield nucleoside 5'-phosphates.. Functionally, involved in mRNA degradation. Hydrolyzes single-stranded polyribonucleotides processively in the 3' to 5' direction. This chain is Exoribonuclease 2, found in Shigella flexneri serotype 5b (strain 8401).